Reading from the N-terminus, the 654-residue chain is Bifunctional 3'-phosphoadenosine 5'-phosphosulfate synthase pps-1 (654 aa).

The interval 1–26 (MLTPRDENNEGDAMPMLKKPRYSSLS) is disordered. An adenylyl-sulfate kinase region spans residues 1-231 (MLTPRDENNE…VLDHLESKGL (231 aa)). Residue 66–71 (GAGKTT) coordinates ATP. Adenosine 5'-phosphosulfate is bound by residues 93–96 (DNIR), F105, 110–113 (RQEN), 136–137 (IS), K175, and 190–191 (GF). ATP is bound by residues C218, 449 to 452 (QLRN), 550 to 554 (GRDPA), and A592. A sulfate adenylyltransferase region spans residues 242-653 (VRELFVSDDL…AGYYKSLQNS (412 aa)).

It in the N-terminal section; belongs to the APS kinase family. In the C-terminal section; belongs to the sulfate adenylyltransferase family.

The protein localises to the nucleus. The catalysed reaction is sulfate + ATP + H(+) = adenosine 5'-phosphosulfate + diphosphate. The enzyme catalyses adenosine 5'-phosphosulfate + ATP = 3'-phosphoadenylyl sulfate + ADP + H(+). It participates in sulfur metabolism; sulfate assimilation. Its function is as follows. Bifunctional enzyme with both ATP sulfurylase and APS kinase activity, which mediates two steps in the sulfate activation pathway. The first step is the transfer of a sulfate group to ATP to yield adenosine 5'-phosphosulfate (APS), and the second step is the transfer of a phosphate group from ATP to APS yielding 3'-phosphoadenylylsulfate (PAPS: activated sulfate donor used by sulfotransferase). Required for normal growth and development. Involved in several aspects of both embryonic and postembryonic development, including molting, changes in cell shape, and patterning of epithelial and muscle cells. This is Bifunctional 3'-phosphoadenosine 5'-phosphosulfate synthase pps-1 from Caenorhabditis elegans.